The sequence spans 329 residues: uncharacterized protein (329 aa).

A disordered region spans residues 109–147 (KALGNDQTSSMTSSTTAVTVAKSGDGQQQTGEQKEEDWK). The segment covering 116 to 131 (TSSMTSSTTAVTVAKS) has biased composition (low complexity).

This sequence to the C-terminal of MG321/MPN_456.

This is an uncharacterized protein from Mycoplasma pneumoniae (strain ATCC 29342 / M129 / Subtype 1) (Mycoplasmoides pneumoniae).